Here is a 289-residue protein sequence, read N- to C-terminus: ATP synthase gamma chain (289 aa).

It belongs to the ATPase gamma chain family. F-type ATPases have 2 components, CF(1) - the catalytic core - and CF(0) - the membrane proton channel. CF(1) has five subunits: alpha(3), beta(3), gamma(1), delta(1), epsilon(1). CF(0) has three main subunits: a, b and c.

It localises to the cell membrane. Produces ATP from ADP in the presence of a proton gradient across the membrane. The gamma chain is believed to be important in regulating ATPase activity and the flow of protons through the CF(0) complex. This Lactococcus lactis subsp. cremoris (strain SK11) protein is ATP synthase gamma chain.